We begin with the raw amino-acid sequence, 46 residues long: KECMADGTVCYIHNHNDCCGSCLCPNGPLARPWEMLVGNCKCGPKA.

4 cysteine pairs are disulfide-bonded: Cys3/Cys19, Cys10/Cys22, Cys18/Cys42, and Cys24/Cys40. Positions 31–33 (RPW) are keys region for toxin activity.

This sequence belongs to the neurotoxin 16 (SFI) family. In terms of tissue distribution, expressed by the venom gland.

Its subcellular location is the secreted. Insecticidal toxin. It inhibits insect voltage-gated sodium channels (Nav) by partially blocking the channel pore in DUM neurons from the American cockroach, not by acting as a gating modifier. The inhibition is only partially reversible after prolonged washout. In vivo, the toxin causes flaccid paralysis followed by death when injected into Heliothis virescens larvae. It also causes uncoordinated movements followed by full paralysis to sheep blowflies (Lucilia cuprina). When the toxin is fused to snowdrop lectin, it is orally active against larvae of the tomato moth (Laconobia oleracea), the rice brown planthopper (Nilaparvata lugens), and the peach-potato aphid (Myzus persicae). The polypeptide is Mu-segestritoxin-Sf1h (Segestria florentina (Tube-web spider)).